Here is a 70-residue protein sequence, read N- to C-terminus: MLKMGVLLFTFLVLFPLAMFQLDADQPVERYAENKQDLNRDERMKIMLSALRQRQCCDWEWCDELCSCCW.

The first 24 residues, 1 to 24 (MLKMGVLLFTFLVLFPLAMFQLDA), serve as a signal peptide directing secretion. Positions 25 to 54 (DQPVERYAENKQDLNRDERMKIMLSALRQR) are excised as a propeptide. Gln-55 is subject to Pyrrolidone carboxylic acid. 3 disulfides stabilise this stretch: Cys-56–Cys-68, Cys-57–Cys-66, and Cys-62–Cys-69.

It belongs to the conotoxin M superfamily. Expressed by the venom duct.

It is found in the secreted. The sequence is that of Conotoxin Lt3.4 from Conus litteratus (Lettered cone).